A 219-amino-acid polypeptide reads, in one-letter code: ATP-dependent Clp protease proteolytic subunit 1 (219 aa).

Serine 113 functions as the Nucleophile in the catalytic mechanism. Histidine 138 is an active-site residue.

It belongs to the peptidase S14 family. As to quaternary structure, fourteen ClpP subunits assemble into 2 heptameric rings which stack back to back to give a disk-like structure with a central cavity, resembling the structure of eukaryotic proteasomes.

The protein localises to the cytoplasm. The enzyme catalyses Hydrolysis of proteins to small peptides in the presence of ATP and magnesium. alpha-casein is the usual test substrate. In the absence of ATP, only oligopeptides shorter than five residues are hydrolyzed (such as succinyl-Leu-Tyr-|-NHMec, and Leu-Tyr-Leu-|-Tyr-Trp, in which cleavage of the -Tyr-|-Leu- and -Tyr-|-Trp bonds also occurs).. Functionally, cleaves peptides in various proteins in a process that requires ATP hydrolysis. Has a chymotrypsin-like activity. Plays a major role in the degradation of misfolded proteins. Probably partially responsible for degradation of ECF sigma factor SigR prime. The chain is ATP-dependent Clp protease proteolytic subunit 1 from Streptomyces coelicolor (strain ATCC BAA-471 / A3(2) / M145).